The sequence spans 473 residues: Ribulose bisphosphate carboxylase large chain (473 aa).

The segment at 1 to 136 is necessary and sufficient to target proteins to carboxysomes, interacts with shell proteins; that stretch reads MAVKKYSAGV…RLEDVRFPLA (136 aa). N116 and T166 together coordinate substrate. The active-site Proton acceptor is the K168. K170 provides a ligand contact to substrate. Residues K194, D196, and E197 each coordinate Mg(2+). At K194 the chain carries N6-carboxylysine. H287 serves as the catalytic Proton acceptor. Substrate contacts are provided by R288, H320, and S372.

Belongs to the RuBisCO large chain family. Type I subfamily. Heterohexadecamer of 8 large chains and 8 small chains. Forms a CsoS2-CsoS1-RuBisCO complex. The N-terminus (residues 1-136) interacts with shell proteins CsoS1A, CsoS1B and CsoS1C. Holo-RuBisCO interacts with the N-terminal repeats of CsoS2; binding is sensitive to ionic strength. A fusion of a single N-terminal repeat to the C-terminus of the large subunit of RuBisCO (cbbL) shows the repeat can lie between a CbbL dimer, making minor contacts to CbbS; thus each RuBisCO holoenzyme could bind 8 repeats. Mg(2+) serves as cofactor.

It is found in the carboxysome. It catalyses the reaction 2 (2R)-3-phosphoglycerate + 2 H(+) = D-ribulose 1,5-bisphosphate + CO2 + H2O. The enzyme catalyses D-ribulose 1,5-bisphosphate + O2 = 2-phosphoglycolate + (2R)-3-phosphoglycerate + 2 H(+). Functionally, ruBisCO catalyzes two reactions: the carboxylation of D-ribulose 1,5-bisphosphate, the primary event in carbon dioxide fixation, as well as the oxidative fragmentation of the pentose substrate. Both reactions occur simultaneously and in competition at the same active site. There are estimated to be 270 RuBisCO heterohexadecamers per carboxysome. Alpha-carboxysomes are able to assemble in the absence of RuBisCO, unlike beta-carboxysomes. The RuBisCO large subunit is required for enzyme integration into carboxysomes; replacing it with the carboxysomally targeted gene (Tcr_0838, AC Q31HD9) of H.crungenus places RuBisCO in the carboxysome, while the non-carboxysomal large subunit of H.crungenus (Tcr_0427, AC Q31IK0) is not incorporated in the carboxysome. In Halothiobacillus neapolitanus (strain ATCC 23641 / c2) (Thiobacillus neapolitanus), this protein is Ribulose bisphosphate carboxylase large chain.